The following is a 798-amino-acid chain: Ubiquitin carboxyl-terminal hydrolase 10 (798 aa).

At Ala2 the chain carries N-acetylalanine. The tract at residues 2–100 (ALHSPQYIFG…ILGCTASKIT (99 aa)) is interaction with p53/TP53. The segment at 6-21 (PQYIFGDFSPDEFNQF) is G3BP1-binding. Thr24 carries the post-translational modification Phosphothreonine. Thr42 carries the phosphothreonine; by ATM modification. At Thr100 the chain carries Phosphothreonine. Disordered regions lie at residues 139–166 (GVSG…LKDG), 194–257 (AEFM…CFPA), and 307–337 (TESI…LPVS). The segment covering 205 to 219 (TPRTCNSPQNSTDSV) has biased composition (polar residues). Residues Ser211 and Ser226 each carry the phosphoserine modification. The span at 307-316 (TESIDLDPTK) shows a compositional bias: basic and acidic residues. Ser321 is modified (phosphoserine). Residues 328 to 337 (GSASGTLPVS) show a composition bias toward polar residues. Position 337 is a phosphoserine; by ATM (Ser337). Residues Ser365 and Ser370 each carry the phosphoserine modification. Residues 415 to 795 (RGLINKGNWC…TAYLLYYRRV (381 aa)) enclose the USP domain. Cys424 serves as the catalytic Nucleophile. Position 547 is a phosphoserine (Ser547). The segment covering 551 to 562 (EKLTISNGPKNH) has biased composition (polar residues). Residues 551–594 (EKLTISNGPKNHSVNEEEQEEQGEGSEDEWEQVGPRNKTSVTRQ) are disordered. Phosphoserine occurs at positions 563 and 576. The span at 566–581 (EEEQEEQGEGSEDEWE) shows a compositional bias: acidic residues. The active-site Proton acceptor is His749.

It belongs to the peptidase C19 family. USP10 subfamily. As to quaternary structure, found in a deubiquitination complex with TANK, USP10 and ZC3H12A; this complex inhibits genotoxic stress- or interleukin-1-beta (IL1B)-mediated NF-kappa-B activation by promoting IKBKG or TRAF6 deubiquitination. Interacts with IKBKG; this interaction increases in response to DNA damage. Interacts with TANK; this interaction increases in response to DNA damage. Interacts with TRAF6; this interaction increases in response to DNA damage. Interacts with ZC3H12A; this interaction increases in response to DNA damage. Interacts with G3BP1 (via NTF2 domain) and G3BP2 (via NTF2 domain); inhibiting stress granule formation. Post-translationally, phosphorylated by ATM following DNA damage, leading to stabilization and translocation it to the nucleus. Ubiquitinated. Deubiquitinated by USP13. As to expression, widely expressed.

The protein resides in the cytoplasm. Its subcellular location is the nucleus. It localises to the early endosome. It catalyses the reaction Thiol-dependent hydrolysis of ester, thioester, amide, peptide and isopeptide bonds formed by the C-terminal Gly of ubiquitin (a 76-residue protein attached to proteins as an intracellular targeting signal).. Specifically inhibited by spautin-1 (specific and potent autophagy inhibitor-1), a derivative of MBCQ that binds to USP10 and inhibits deubiquitinase activity. Regulated by PIK3C3/VPS34-containing complexes. Its function is as follows. Hydrolase that can remove conjugated ubiquitin from target proteins such as p53/TP53, RPS2/us5, RPS3/us3, RPS10/eS10, BECN1, SNX3 and CFTR. Acts as an essential regulator of p53/TP53 stability: in unstressed cells, specifically deubiquitinates p53/TP53 in the cytoplasm, leading to counteract MDM2 action and stabilize p53/TP53. Following DNA damage, translocates to the nucleus and deubiquitinates p53/TP53, leading to regulate the p53/TP53-dependent DNA damage response. Component of a regulatory loop that controls autophagy and p53/TP53 levels: mediates deubiquitination of BECN1, a key regulator of autophagy, leading to stabilize the PIK3C3/VPS34-containing complexes. In turn, PIK3C3/VPS34-containing complexes regulate USP10 stability, suggesting the existence of a regulatory system by which PIK3C3/VPS34-containing complexes regulate p53/TP53 protein levels via USP10 and USP13. Does not deubiquitinate MDM2. Plays a key role in 40S ribosome subunit recycling when a ribosome has stalled during translation: acts both by inhibiting formation of stress granules, which store stalled translation pre-initiation complexes, and mediating deubiquitination of 40S ribosome subunits. Acts as a negative regulator of stress granules formation by lowering G3BP1 and G3BP2 valence, thereby preventing G3BP1 and G3BP2 ability to undergo liquid-liquid phase separation (LLPS) and assembly of stress granules. Promotes 40S ribosome subunit recycling following ribosome dissociation in response to ribosome stalling by mediating deubiquitination of 40S ribosomal proteins RPS2/us5, RPS3/us3 and RPS10/eS10, thereby preventing their degradation by the proteasome. Part of a ribosome quality control that takes place when ribosomes have stalled during translation initiation (iRQC): USP10 acts by removing monoubiquitination of RPS2/us5 and RPS3/us3, promoting 40S ribosomal subunit recycling. Deubiquitinates CFTR in early endosomes, enhancing its endocytic recycling. Involved in a TANK-dependent negative feedback response to attenuate NF-kappa-B activation via deubiquitinating IKBKG or TRAF6 in response to interleukin-1-beta (IL1B) stimulation or upon DNA damage. Deubiquitinates TBX21 leading to its stabilization. Plays a negative role in the RLR signaling pathway upon RNA virus infection by blocking the RIGI-mediated MAVS activation. Mechanistically, removes the unanchored 'Lys-63'-linked polyubiquitin chains of MAVS to inhibit its aggregation, essential for its activation. The protein is Ubiquitin carboxyl-terminal hydrolase 10 of Homo sapiens (Human).